The primary structure comprises 842 residues: Protein translocase subunit SecA (842 aa).

Residues glutamine 85, 103–107, and aspartate 493 each bind ATP; that span reads GEGKT. Zn(2+) contacts are provided by cysteine 825, cysteine 827, cysteine 836, and histidine 837.

It belongs to the SecA family. Monomer and homodimer. Part of the essential Sec protein translocation apparatus which comprises SecA, SecYEG and auxiliary proteins SecDF. Other proteins may also be involved. It depends on Zn(2+) as a cofactor.

The protein resides in the cell membrane. It is found in the cytoplasm. It carries out the reaction ATP + H2O + cellular proteinSide 1 = ADP + phosphate + cellular proteinSide 2.. Functionally, part of the Sec protein translocase complex. Interacts with the SecYEG preprotein conducting channel. Has a central role in coupling the hydrolysis of ATP to the transfer of proteins into and across the cell membrane, serving as an ATP-driven molecular motor driving the stepwise translocation of polypeptide chains across the membrane. The sequence is that of Protein translocase subunit SecA from Streptococcus equi subsp. zooepidemicus (strain MGCS10565).